A 272-amino-acid chain; its full sequence is L-aspartate dehydrogenase (272 aa).

NAD(+) is bound by residues Ala-125 and Asn-192. His-222 is an active-site residue.

Belongs to the L-aspartate dehydrogenase family.

It catalyses the reaction L-aspartate + NADP(+) + H2O = oxaloacetate + NH4(+) + NADPH + H(+). The catalysed reaction is L-aspartate + NAD(+) + H2O = oxaloacetate + NH4(+) + NADH + H(+). It participates in cofactor biosynthesis; NAD(+) biosynthesis; iminoaspartate from L-aspartate (dehydrogenase route): step 1/1. In terms of biological role, specifically catalyzes the NAD or NADP-dependent dehydrogenation of L-aspartate to iminoaspartate. This chain is L-aspartate dehydrogenase, found in Nitrosopumilus maritimus (strain SCM1).